A 145-amino-acid polypeptide reads, in one-letter code: Hemoglobin fetal subunit beta (145 aa).

In terms of domain architecture, Globin spans 1-145 (MLTAEEKASV…VANALAHRYH (145 aa)). The heme b site is built by histidine 62 and histidine 91.

The protein belongs to the globin family. Heterotetramer of two alpha chains and two beta chains.

The chain is Hemoglobin fetal subunit beta from Ovis aries (Sheep).